The primary structure comprises 239 residues: Purine nucleoside phosphorylase DeoD-type (239 aa).

H5 contributes to the a purine D-ribonucleoside binding site. Residues G21, R25, R44, and 88–91 (RVGS) each bind phosphate. A purine D-ribonucleoside is bound by residues 180–182 (EME) and 204–205 (SD). Residue D205 is the Proton donor of the active site.

This sequence belongs to the PNP/UDP phosphorylase family. In terms of assembly, homohexamer; trimer of homodimers.

It carries out the reaction a purine D-ribonucleoside + phosphate = a purine nucleobase + alpha-D-ribose 1-phosphate. It catalyses the reaction a purine 2'-deoxy-D-ribonucleoside + phosphate = a purine nucleobase + 2-deoxy-alpha-D-ribose 1-phosphate. Its function is as follows. Catalyzes the reversible phosphorolytic breakdown of the N-glycosidic bond in the beta-(deoxy)ribonucleoside molecules, with the formation of the corresponding free purine bases and pentose-1-phosphate. The protein is Purine nucleoside phosphorylase DeoD-type of Salmonella choleraesuis (strain SC-B67).